Consider the following 933-residue polypeptide: Anoctamin-7 (933 aa).

The Cytoplasmic segment spans residues 1 to 355 (MRMAATAWAG…YFAWLGFYTG (355 aa)). The tract at residues 43–101 (ETSSGSHCARSRMLRRRAQEEDSTVLIDVSPPEAEKRGSYGSTAHASEPGGQQAAACRA) is disordered. Residues 356 to 376 (WLLPAAVVGTLVFLVGCFLVF) traverse the membrane as a helical segment. The Extracellular segment spans residues 377–420 (SDIPTQELCGSKDSFEMCPLCLDCPFWLLSSACALAQAGRLFDH). A helical membrane pass occupies residues 421-441 (GGTVFFSLFMALWAVLLLEYW). Residues 442–499 (KRKSATLAYRWDCSDYEDTEERPRPQFAASAPMTAPNPITGEDEPYFPERSRARRMLA) are Cytoplasmic-facing. Residues 500–520 (GSVVIVVMVAVVVMCLVSIIL) form a helical membrane-spanning segment. Topologically, residues 521–550 (YRAIMAIVVSRSGNTLLAAWASRIASLTGS) are extracellular. The chain crosses the membrane as a helical span at residues 551-571 (VVNLVFILILSKIYVSLAHVL). Residues 572–588 (TRWEMHRTQTKFEDAFT) are Cytoplasmic-facing. The chain crosses the membrane as a helical span at residues 589–609 (LKVFIFQFVNFYSSPVYIAFF). At 610–714 (KGRFVGYPGN…FDEYLEMVLQ (105 aa)) the chain is on the extracellular side. Residues 715–735 (FGFVTIFVAACPLAPLFALLN) traverse the membrane as a helical segment. The Cytoplasmic segment spans residues 736–763 (NWVEIRLDARKFVCEYRRPVAERAQDIG). Residues 764–784 (IWFHILAGLTHLAVISNAFLL) form a helical membrane-spanning segment. Topologically, residues 785 to 843 (AFSSDFLPRAYYRWTRAHDLRGFLNFTLARAPSSFAAAHNRTCRYRAFRDDDGHYSQTY) are extracellular. 2 N-linked (GlcNAc...) asparagine glycosylation sites follow: asparagine 809 and asparagine 824. A helical membrane pass occupies residues 844-864 (WNLLAIRLAFVIVFEHVVFSV). Over 865-933 (GRLLDLLVPD…TVPKASQLQQ (69 aa)) the chain is Cytoplasmic. Residues 902–933 (GTNGTKDEQPEGSELSSHWTPFTVPKASQLQQ) are disordered. Over residues 915–933 (ELSSHWTPFTVPKASQLQQ) the composition is skewed to polar residues.

Belongs to the anoctamin family. Specifically expressed in epithelial cells of the prostate (at protein level).

The protein resides in the cell membrane. The protein localises to the cell junction. It localises to the endoplasmic reticulum. Its subcellular location is the cytoplasm. It is found in the cytosol. It catalyses the reaction a 1,2-diacyl-sn-glycero-3-phospho-L-serine(in) = a 1,2-diacyl-sn-glycero-3-phospho-L-serine(out). The enzyme catalyses a beta-D-galactosyl-(1&lt;-&gt;1')-N-acylsphing-4-enine(out) = a beta-D-galactosyl-(1&lt;-&gt;1')-N-acylsphing-4-enine(in). It carries out the reaction a 1,2-diacyl-sn-glycero-3-phosphocholine(in) = a 1,2-diacyl-sn-glycero-3-phosphocholine(out). Has calcium-dependent phospholipid scramblase activity; scrambles phosphatidylserine, phosphatidylcholine and galactosylceramide. Does not exhibit calcium-activated chloride channel (CaCC) activity. May play a role in cell-cell interactions. The sequence is that of Anoctamin-7 (ANO7) from Homo sapiens (Human).